The sequence spans 322 residues: Cyclin mcs2 (322 aa).

S310 carries the post-translational modification Phosphoserine.

It belongs to the cyclin family. Cyclin C subfamily. In terms of assembly, one of the nine subunits forming the core-TFIIH basal transcription factor. Interacts with crk1 and skp1.

The protein resides in the nucleus. Essential for progression through the cell cycle. Possesses kinase activity that can be detected when myelin basic protein (MBP) is provided as an exogenous substrate. The polypeptide is Cyclin mcs2 (mcs2) (Schizosaccharomyces pombe (strain 972 / ATCC 24843) (Fission yeast)).